The sequence spans 44 residues: Thymosin beta-12 (44 aa).

Composition is skewed to basic and acidic residues over residues Met1 to Glu25 and Glu33 to Ser44. The disordered stretch occupies residues Met1 to Ser44. Ser2 bears the N-acetylserine mark.

The protein belongs to the thymosin beta family.

It localises to the cytoplasm. The protein resides in the cytoskeleton. Plays an important role in the organization of the cytoskeleton. Binds to and sequesters actin monomers (G actin) and therefore inhibits actin polymerization. This Lateolabrax japonicus (Japanese sea perch) protein is Thymosin beta-12.